A 267-amino-acid chain; its full sequence is 4-hydroxy-tetrahydrodipicolinate reductase (267 aa).

8-13 (GANGRM) contacts NAD(+). R35 provides a ligand contact to NADP(+). NAD(+) is bound by residues 98–100 (GTT) and 122–125 (AANY). The active-site Proton donor/acceptor is H155. H156 serves as a coordination point for (S)-2,3,4,5-tetrahydrodipicolinate. K159 functions as the Proton donor in the catalytic mechanism. 165–166 (GT) serves as a coordination point for (S)-2,3,4,5-tetrahydrodipicolinate.

Belongs to the DapB family.

It is found in the cytoplasm. It carries out the reaction (S)-2,3,4,5-tetrahydrodipicolinate + NAD(+) + H2O = (2S,4S)-4-hydroxy-2,3,4,5-tetrahydrodipicolinate + NADH + H(+). It catalyses the reaction (S)-2,3,4,5-tetrahydrodipicolinate + NADP(+) + H2O = (2S,4S)-4-hydroxy-2,3,4,5-tetrahydrodipicolinate + NADPH + H(+). The protein operates within amino-acid biosynthesis; L-lysine biosynthesis via DAP pathway; (S)-tetrahydrodipicolinate from L-aspartate: step 4/4. Its function is as follows. Catalyzes the conversion of 4-hydroxy-tetrahydrodipicolinate (HTPA) to tetrahydrodipicolinate. The sequence is that of 4-hydroxy-tetrahydrodipicolinate reductase from Pseudoalteromonas atlantica (strain T6c / ATCC BAA-1087).